We begin with the raw amino-acid sequence, 212 residues long: Leucyl/phenylalanyl-tRNA--protein transferase (212 aa).

The protein belongs to the L/F-transferase family.

The protein resides in the cytoplasm. It carries out the reaction N-terminal L-lysyl-[protein] + L-leucyl-tRNA(Leu) = N-terminal L-leucyl-L-lysyl-[protein] + tRNA(Leu) + H(+). The catalysed reaction is N-terminal L-arginyl-[protein] + L-leucyl-tRNA(Leu) = N-terminal L-leucyl-L-arginyl-[protein] + tRNA(Leu) + H(+). It catalyses the reaction L-phenylalanyl-tRNA(Phe) + an N-terminal L-alpha-aminoacyl-[protein] = an N-terminal L-phenylalanyl-L-alpha-aminoacyl-[protein] + tRNA(Phe). Its function is as follows. Functions in the N-end rule pathway of protein degradation where it conjugates Leu, Phe and, less efficiently, Met from aminoacyl-tRNAs to the N-termini of proteins containing an N-terminal arginine or lysine. The polypeptide is Leucyl/phenylalanyl-tRNA--protein transferase (Christiangramia forsetii (strain DSM 17595 / CGMCC 1.15422 / KT0803) (Gramella forsetii)).